The chain runs to 374 residues: Protein-glutamate methylesterase/protein-glutamine glutaminase (374 aa).

Positions 4 to 121 constitute a Response regulatory domain; sequence KVLVVDDSGF…SRNPDKVKQM (118 aa). Asp-55 is modified (4-aspartylphosphate). Residues 144-186 form a disordered region; it reads PVAAPVPASSPAPASSFASPAPARPAATARAAAPAASHSPAPK. The segment covering 154–183 has biased composition (low complexity); the sequence is PAPASSFASPAPARPAATARAAAPAASHSP. The CheB-type methylesterase domain occupies 183-374; it reads PAPKRKPYKL…IGKHLVEACV (192 aa). Active-site residues include Ser-198, His-225, and Asp-318.

This sequence belongs to the CheB family. In terms of processing, phosphorylated by CheA. Phosphorylation of the N-terminal regulatory domain activates the methylesterase activity.

The protein localises to the cytoplasm. The catalysed reaction is [protein]-L-glutamate 5-O-methyl ester + H2O = L-glutamyl-[protein] + methanol + H(+). It carries out the reaction L-glutaminyl-[protein] + H2O = L-glutamyl-[protein] + NH4(+). Involved in chemotaxis. Part of a chemotaxis signal transduction system that modulates chemotaxis in response to various stimuli. Catalyzes the demethylation of specific methylglutamate residues introduced into the chemoreceptors (methyl-accepting chemotaxis proteins or MCP) by CheR. Also mediates the irreversible deamidation of specific glutamine residues to glutamic acid. The polypeptide is Protein-glutamate methylesterase/protein-glutamine glutaminase (Pseudomonas putida (Arthrobacter siderocapsulatus)).